We begin with the raw amino-acid sequence, 395 residues long: S-adenosylmethionine synthase (395 aa).

Residue histidine 16 coordinates ATP. Aspartate 18 serves as a coordination point for Mg(2+). K(+) is bound at residue glutamate 44. The L-methionine site is built by glutamate 57 and glutamine 100. The segment at glutamine 100–aspartate 110 is flexible loop. ATP is bound by residues aspartate 174–lysine 176, arginine 241–phenylalanine 242, aspartate 250, arginine 256–lysine 257, alanine 273, and lysine 277. Aspartate 250 provides a ligand contact to L-methionine. Lysine 281 contacts L-methionine.

It belongs to the AdoMet synthase family. In terms of assembly, homotetramer; dimer of dimers. It depends on Mg(2+) as a cofactor. K(+) serves as cofactor.

The protein localises to the cytoplasm. The catalysed reaction is L-methionine + ATP + H2O = S-adenosyl-L-methionine + phosphate + diphosphate. It participates in amino-acid biosynthesis; S-adenosyl-L-methionine biosynthesis; S-adenosyl-L-methionine from L-methionine: step 1/1. Catalyzes the formation of S-adenosylmethionine (AdoMet) from methionine and ATP. The overall synthetic reaction is composed of two sequential steps, AdoMet formation and the subsequent tripolyphosphate hydrolysis which occurs prior to release of AdoMet from the enzyme. The chain is S-adenosylmethionine synthase from Lactiplantibacillus plantarum (strain ATCC BAA-793 / NCIMB 8826 / WCFS1) (Lactobacillus plantarum).